The chain runs to 308 residues: tRNA pseudouridine synthase B (308 aa).

Catalysis depends on aspartate 44, which acts as the Nucleophile.

This sequence belongs to the pseudouridine synthase TruB family. Type 1 subfamily.

The enzyme catalyses uridine(55) in tRNA = pseudouridine(55) in tRNA. In terms of biological role, responsible for synthesis of pseudouridine from uracil-55 in the psi GC loop of transfer RNAs. The polypeptide is tRNA pseudouridine synthase B (Bdellovibrio bacteriovorus (strain ATCC 15356 / DSM 50701 / NCIMB 9529 / HD100)).